Consider the following 146-residue polypeptide: Hemoglobin subunit beta (146 aa).

Valine 1 carries the N-acetylvaline modification. Residues 2–146 form the Globin domain; it reads HLSGEEKGAV…VATALAHKYH (145 aa). Threonine 12 carries the post-translational modification Phosphothreonine. Phosphoserine is present on serine 44. Lysine 59 carries the N6-acetyllysine modification. Histidine 63 is a binding site for heme b. An N6-acetyllysine modification is found at lysine 82. Histidine 92 provides a ligand contact to heme b. Cysteine 93 carries the post-translational modification S-nitrosocysteine. Lysine 144 carries the N6-acetyllysine modification.

The protein belongs to the globin family. As to quaternary structure, heterotetramer of two alpha chains and two beta chains. In terms of tissue distribution, red blood cells.

Functionally, involved in oxygen transport from the lung to the various peripheral tissues. The polypeptide is Hemoglobin subunit beta (HBB) (Tadarida brasiliensis (Brazilian free-tailed bat)).